We begin with the raw amino-acid sequence, 348 residues long: Ketol-acid reductoisomerase (NADP(+)) (348 aa).

Residues 1-179 (MDVHYDADPA…GGTHAGVIET (179 aa)) form the KARI N-terminal Rossmann domain. Residues 22-25 (YGSQ), Arg45, Ser48, Ser50, and 80-83 (DQHQ) contribute to the NADP(+) site. Residue His105 is part of the active site. An NADP(+)-binding site is contributed by Gly131. The 146-residue stretch at 180–325 (TFKDETETDL…QTLRGMMPWL (146 aa)) folds into the KARI C-terminal knotted domain. Residues Asp188, Glu192, Glu224, and Glu228 each coordinate Mg(2+). Substrate is bound at residue Ser249. The interval 323–348 (PWLNGDETSADEDAPDAADTAPASSS) is disordered. Residues 339–348 (AADTAPASSS) show a composition bias toward low complexity.

Belongs to the ketol-acid reductoisomerase family. The cofactor is Mg(2+).

The enzyme catalyses (2R)-2,3-dihydroxy-3-methylbutanoate + NADP(+) = (2S)-2-acetolactate + NADPH + H(+). It carries out the reaction (2R,3R)-2,3-dihydroxy-3-methylpentanoate + NADP(+) = (S)-2-ethyl-2-hydroxy-3-oxobutanoate + NADPH + H(+). Its pathway is amino-acid biosynthesis; L-isoleucine biosynthesis; L-isoleucine from 2-oxobutanoate: step 2/4. It participates in amino-acid biosynthesis; L-valine biosynthesis; L-valine from pyruvate: step 2/4. Functionally, involved in the biosynthesis of branched-chain amino acids (BCAA). Catalyzes an alkyl-migration followed by a ketol-acid reduction of (S)-2-acetolactate (S2AL) to yield (R)-2,3-dihydroxy-isovalerate. In the isomerase reaction, S2AL is rearranged via a Mg-dependent methyl migration to produce 3-hydroxy-3-methyl-2-ketobutyrate (HMKB). In the reductase reaction, this 2-ketoacid undergoes a metal-dependent reduction by NADPH to yield (R)-2,3-dihydroxy-isovalerate. This Salinibacter ruber (strain DSM 13855 / M31) protein is Ketol-acid reductoisomerase (NADP(+)).